The chain runs to 308 residues: Protein FdhE homolog (308 aa).

Belongs to the FdhE family.

It localises to the cytoplasm. In terms of biological role, necessary for formate dehydrogenase activity. This is Protein FdhE homolog from Edwardsiella ictaluri (strain 93-146).